We begin with the raw amino-acid sequence, 470 residues long: Acetyl-CoA decarbonylase/synthase complex subunit gamma (470 aa).

Positions 1-62 constitute a 4Fe-4S domain; the sequence is MKVKSPLEVY…DPKVKKKLEE (62 aa). [4Fe-4S] cluster contacts are provided by C18, C21, C26, and C43.

In terms of assembly, heterodimer of delta and gamma chains. The ACDS complex is made up of alpha, epsilon, beta, gamma and delta chains with a probable stoichiometry of (alpha(2)epsilon(2))(4)-beta(8)-(gamma(1)delta(1))(8). The cofactor is corrinoid. [4Fe-4S] cluster is required as a cofactor.

It carries out the reaction 5,6,7,8-tetrahydrosarcinapterin + methyl-Co(III)-[corrinoid Fe-S protein] = 5-methyltetrahydrosarcinapterin + Co(I)-[corrinoid Fe-S protein] + H(+). Its function is as follows. Part of a complex that catalyzes the reversible cleavage of acetyl-CoA, allowing autotrophic growth from CO(2). In Archaeoglobus fulgidus (strain ATCC 49558 / DSM 4304 / JCM 9628 / NBRC 100126 / VC-16), this protein is Acetyl-CoA decarbonylase/synthase complex subunit gamma.